Reading from the N-terminus, the 469-residue chain is UDP-glycosyltransferase 43 (469 aa).

Residues Ser280, 345–346 (WV), 363–371 (HCGWNSILE), and 385–388 (YSEQ) each bind UDP-alpha-D-glucose.

It belongs to the UDP-glycosyltransferase family.

Its activity is regulated as follows. Inhibited by Cu(2+) or Zn(2+). Glycosyltransferase that catalyzes the C-glucosylation of daidzein to puerarin. Shows activity with the isoflavones daidzein and genistein, but has no activity towards flavonoids such as 2-hydroxynaringenin. Can use UDP-glucose, but not UDP-galactose or UDP-glucuronic acid as sugar donor. Does not require bivalent cations for activity. The polypeptide is UDP-glycosyltransferase 43 (Pueraria montana var. lobata (Kudzu vine)).